Reading from the N-terminus, the 134-residue chain is Putative pre-16S rRNA nuclease (134 aa).

This sequence belongs to the YqgF nuclease family.

The protein localises to the cytoplasm. Could be a nuclease involved in processing of the 5'-end of pre-16S rRNA. This chain is Putative pre-16S rRNA nuclease, found in Helicobacter pylori (strain ATCC 700392 / 26695) (Campylobacter pylori).